A 247-amino-acid polypeptide reads, in one-letter code: MSRFPRRFIDDSSMEDAGISLCPSIHYRPINPNDLDRLEQIHRDIFPIKYESEFFQSVVNGVDIVSWAAVDRSRPDDHSDELIGFVTAKFVLAKDSEIDDLIHYDSSKGEETLIYILTLGVVETYRNRGIAMSLISEVIKYASGLSVCRGVYLHVIAHNNAAICLYKRLMFRCVRRLHGFYLINRHHFDAFLFVYFINGSRTPCSPLEVAMFVVNYMKSGIKSVASKLANKDEKGLKWLFCKDTDCV.

Residues 25–198 (IHYRPINPND…DAFLFVYFIN (174 aa)) enclose the N-acetyltransferase domain.

Belongs to the acetyltransferase family.

The enzyme catalyses L-lysyl-[protein] + acetyl-CoA = N(6)-acetyl-L-lysyl-[protein] + CoA + H(+). Functionally, histone acetyltransferase that probably regulates acetylation status of histone H3 during meiosis. Histone acetylation may influence recombination and chromosome segregation. In Arabidopsis thaliana (Mouse-ear cress), this protein is Histone acetyltransferase MCC1 (MCC1).